The following is a 202-amino-acid chain: MCRTLAAFPTSCLERAKEFKTRLGIFLHKSELGSDTGSVGKFEWGSKHSKEGKNFSEDVLGWKESFDLLLSSKNGVAAFHAFLKTEFSEENLEFWLACEEFKKLRSATKLGSRAHRIFEEFICSEAPKEVNIDHETRELTRTNLQAATAVCFDAAQWKVRALMEKDSYPRFLKSPAYRDLATQATAASASPSSSSPAEPLHT.

Residues Cys2 and Cys12 are each lipidated (S-palmitoyl cysteine). Residues 65–181 enclose the RGS domain; that stretch reads SFDLLLSSKN…LKSPAYRDLA (117 aa). Phosphotyrosine; by EGFR is present on Tyr168. Tyr177 carries the post-translational modification Phosphotyrosine. Positions 183–202 are disordered; sequence QATAASASPSSSSPAEPLHT.

As to quaternary structure, interacts with GNAI1 and GNAQ. Interacts with GNAI3, GNAI3 and GNAO1. Palmitoylated on Cys-2 and/or Cys-12. Post-translationally, phosphorylated. Phosphorylation at Tyr-168 by EGFR enhances GTPase accelerating (GAP) activity toward GNAI1.

It is found in the membrane. Regulates G protein-coupled receptor signaling cascades. Inhibits signal transduction by increasing the GTPase activity of G protein alpha subunits, thereby driving them into their inactive GDP-bound form. Plays an important role in the phototransduction cascade by regulating the lifetime and effective concentration of activated transducin alpha. May regulate extra and intracellular mitogenic signals. In Bos taurus (Bovine), this protein is Regulator of G-protein signaling 16 (RGS16).